A 37-amino-acid polypeptide reads, in one-letter code: MRVQPSVKKICRNCKIIRRNRVVRVICTDPRHKQKQG.

This sequence belongs to the bacterial ribosomal protein bL36 family.

The chain is Large ribosomal subunit protein bL36 from Chromobacterium violaceum (strain ATCC 12472 / DSM 30191 / JCM 1249 / CCUG 213 / NBRC 12614 / NCIMB 9131 / NCTC 9757 / MK).